A 420-amino-acid polypeptide reads, in one-letter code: Methanogen homoaconitase large subunit (420 aa).

Cys-302, Cys-362, and Cys-365 together coordinate [4Fe-4S] cluster.

This sequence belongs to the aconitase/IPM isomerase family. LeuC type 2 subfamily. Heterotetramer of 2 HacA and 2 HacB proteins. [4Fe-4S] cluster serves as cofactor.

The enzyme catalyses (2R)-homocitrate = (2R,3S)-homoisocitrate. It catalyses the reaction (2R)-homocitrate = cis-homoaconitate + H2O. It carries out the reaction (2R,3S)-homoisocitrate = cis-homoaconitate + H2O. The catalysed reaction is cis-(homo)2aconitate + H2O = (2R,3S)-iso(homo)2citrate. The enzyme catalyses cis-(homo)3aconitate + H2O = (2R,3S)-iso(homo)3citrate. It catalyses the reaction (R)-malate = maleate + H2O. It carries out the reaction cis-aconitate + H2O = D-threo-isocitrate. It participates in organic acid metabolism; 2-oxosuberate biosynthesis. Functionally, component of a hydro-lyase with broad substrate specificity for cis-unsaturated tricarboxylic acids. Catalyzes both the reversible dehydration of (R)-homocitrate ((R)-2-hydroxybutane-1,2,4-tricarboxylate) to produce cis-homoaconitate ((Z)-but-1-ene-1,2,4-tricarboxylate), and its hydration to homoisocitrate ((1R,2S)-1-hydroxybutane-1,2,4-tricarboxylate). Is also able to hydrate the analogous longer chain substrates cis-homo(2)-aconitate, cis-homo(3)-aconitate, and even the non-physiological cis-homo(4)-aconitate with similar efficiency. These reactions are part of the biosynthesis pathway of coenzyme B. Can also catalyze the hydration of maleate to (R)-malate, and that of cis-aconitate. Cannot catalyze the hydration of citraconate and the dehydration of (S)-homocitrate, citramalate, 2-isopropylmalate, 3-isopropylmalate, citrate or threo-DL-isocitrate. This Methanocaldococcus jannaschii (strain ATCC 43067 / DSM 2661 / JAL-1 / JCM 10045 / NBRC 100440) (Methanococcus jannaschii) protein is Methanogen homoaconitase large subunit (hacA).